The primary structure comprises 157 residues: MAKKKSKKTPDNVLAQNRKARHDYTVLETVEAGIALTGTEIKSVRERRVNLQDGFAQIRNNEAWLMNVHISEYVQGNRFNHDPLRNRKLLLHKKEIRRLGQATMDKGVTLVPLRMYLKHGFAKVLIGVAQGKREFDKRETIKRREQDRQIARVMKHY.

Belongs to the SmpB family.

Its subcellular location is the cytoplasm. Its function is as follows. Required for rescue of stalled ribosomes mediated by trans-translation. Binds to transfer-messenger RNA (tmRNA), required for stable association of tmRNA with ribosomes. tmRNA and SmpB together mimic tRNA shape, replacing the anticodon stem-loop with SmpB. tmRNA is encoded by the ssrA gene; the 2 termini fold to resemble tRNA(Ala) and it encodes a 'tag peptide', a short internal open reading frame. During trans-translation Ala-aminoacylated tmRNA acts like a tRNA, entering the A-site of stalled ribosomes, displacing the stalled mRNA. The ribosome then switches to translate the ORF on the tmRNA; the nascent peptide is terminated with the 'tag peptide' encoded by the tmRNA and targeted for degradation. The ribosome is freed to recommence translation, which seems to be the essential function of trans-translation. The polypeptide is SsrA-binding protein (Levilactobacillus brevis (strain ATCC 367 / BCRC 12310 / CIP 105137 / JCM 1170 / LMG 11437 / NCIMB 947 / NCTC 947) (Lactobacillus brevis)).